Here is a 493-residue protein sequence, read N- to C-terminus: ATP synthase subunit beta, chloroplastic (493 aa).

170-177 (GGAGVGKT) contacts ATP.

Belongs to the ATPase alpha/beta chains family. In terms of assembly, F-type ATPases have 2 components, CF(1) - the catalytic core - and CF(0) - the membrane proton channel. CF(1) has five subunits: alpha(3), beta(3), gamma(1), delta(1), epsilon(1). CF(0) has four main subunits: a(1), b(1), b'(1) and c(9-12).

It is found in the plastid. Its subcellular location is the chloroplast thylakoid membrane. It carries out the reaction ATP + H2O + 4 H(+)(in) = ADP + phosphate + 5 H(+)(out). Its function is as follows. Produces ATP from ADP in the presence of a proton gradient across the membrane. The catalytic sites are hosted primarily by the beta subunits. The chain is ATP synthase subunit beta, chloroplastic from Staurastrum punctulatum (Green alga).